The chain runs to 279 residues: Dermonecrotic toxin LrSicTox-alphaIA1i (279 aa).

His-11 is an active-site residue. Residues Glu-31 and Asp-33 each contribute to the Mg(2+) site. His-47 serves as the catalytic Nucleophile. Intrachain disulfides connect Cys-51-Cys-57 and Cys-53-Cys-196. Mg(2+) is bound at residue Asp-91. Asn-256 is a glycosylation site (N-linked (GlcNAc...) asparagine).

Belongs to the arthropod phospholipase D family. Class II subfamily. Requires Mg(2+) as cofactor. Expressed by the venom gland.

It localises to the secreted. The enzyme catalyses an N-(acyl)-sphingosylphosphocholine = an N-(acyl)-sphingosyl-1,3-cyclic phosphate + choline. The catalysed reaction is an N-(acyl)-sphingosylphosphoethanolamine = an N-(acyl)-sphingosyl-1,3-cyclic phosphate + ethanolamine. It catalyses the reaction a 1-acyl-sn-glycero-3-phosphocholine = a 1-acyl-sn-glycero-2,3-cyclic phosphate + choline. It carries out the reaction a 1-acyl-sn-glycero-3-phosphoethanolamine = a 1-acyl-sn-glycero-2,3-cyclic phosphate + ethanolamine. Inhibited with low affinity by edelfosine. In terms of biological role, dermonecrotic toxins cleave the phosphodiester linkage between the phosphate and headgroup of certain phospholipids (sphingolipid and lysolipid substrates), forming an alcohol (often choline) and a cyclic phosphate. This toxin acts on sphingomyelin (SM). It also acts on a broad range of lysophospholipids, like lysophosphatidylinositol (LPI), lysophosphatidylglycerol (LPG), lysophosphatidylethanolamine (LPE), lysobisphosphatidic acid (LBPA), lysophosphatidylserine (LPS) and lysophosphatidylcholines (LPC) of varying chain lengths. The substrate preference is LPI &gt; LPG &gt; LPS &gt; LPC &gt;&gt; LPE, LBPA. Furthermore, the enzyme also act on cyclic phosphatidic acid and lyso-platelet activating factor (LPAF, an alkyl-LPC). The enzyme does not act on sphingosylphosphorylcholine (SPC, also known as lyso-sphingomyelin) and PAF. The toxin may also act on ceramide phosphoethanolamine (CPE). It acts by transphosphatidylation, releasing exclusively cyclic phosphate products as second products. It does not exhibit detectable PLA1/2 activity. It induces dose-dependent hemolysis and dermonecrosis. Also induces increased vascular permeability, edema, inflammatory response, and platelet aggregation. The polypeptide is Dermonecrotic toxin LrSicTox-alphaIA1i (Loxosceles reclusa (Brown recluse spider)).